The sequence spans 158 residues: Transcriptional regulator MraZ (158 aa).

SpoVT-AbrB domains lie at 5–50 (IYET…GGVY) and 91–134 (AVEC…SQSE).

It belongs to the MraZ family. In terms of assembly, forms oligomers.

Its subcellular location is the cytoplasm. The protein resides in the nucleoid. The sequence is that of Transcriptional regulator MraZ from Geobacter metallireducens (strain ATCC 53774 / DSM 7210 / GS-15).